A 329-amino-acid polypeptide reads, in one-letter code: BRISC and BRCA1-A complex member 1 (329 aa).

At Met1 the chain carries N-acetylmethionine. Positions 1–86 (MEVAEPSSPT…PPAPEVQIRT (86 aa)) are disordered. Ser8 is subject to Phosphoserine. Residues 10-19 (TEEEEEEEEH) show a composition bias toward acidic residues. Ser29, Ser49, Ser57, and Ser62 each carry phosphoserine. Thr65 is subject to Phosphothreonine. Position 66 is a phosphoserine (Ser66). The tract at residues 95–298 (VIICLDLSEE…LELHNCMVKL (204 aa)) is VWFA-like.

Belongs to the BABAM1 family. As to quaternary structure, component of the ARISC complex, at least composed of UIMC1/RAP80, ABRAXAS1, BRCC3/BRCC36, BABAM2 and BABAM1/NBA1. Component of the BRCA1-A complex, at least composed of BRCA1, BARD1, UIMC1/RAP80, ABRAXAS1, BRCC3/BRCC36, BABAM2 and BABAM1/NBA1. In the BRCA1-A complex, interacts directly with ABRAXAS1 and BABAM2. Component of the BRISC complex, at least composed of ABRAXAS2, BRCC3/BRCC36, BABAM2 and BABAM1/NBA1. Identified in a complex with SHMT2 and the other subunits of the BRISC complex.

The protein resides in the cytoplasm. It localises to the nucleus. Its function is as follows. Component of the BRCA1-A complex, a complex that specifically recognizes 'Lys-63'-linked ubiquitinated histones H2A and H2AX at DNA lesions sites, leading to target the BRCA1-BARD1 heterodimer to sites of DNA damage at double-strand breaks (DSBs). The BRCA1-A complex also possesses deubiquitinase activity that specifically removes 'Lys-63'-linked ubiquitin on histones H2A and H2AX. In the BRCA1-A complex, it is required for the complex integrity and its localization at DSBs. Component of the BRISC complex, a multiprotein complex that specifically cleaves 'Lys-63'-linked ubiquitin in various substrates. In these 2 complexes, it is probably required to maintain the stability of BABAM2 and help the 'Lys-63'-linked deubiquitinase activity mediated by BRCC3/BRCC36 component. The BRISC complex is required for normal mitotic spindle assembly and microtubule attachment to kinetochores via its role in deubiquitinating NUMA1. Plays a role in interferon signaling via its role in the deubiquitination of the interferon receptor IFNAR1; deubiquitination increases IFNAR1 activity by enhancing its stability and cell surface expression. Down-regulates the response to bacterial lipopolysaccharide (LPS) via its role in IFNAR1 deubiquitination. The polypeptide is BRISC and BRCA1-A complex member 1 (BABAM1) (Callithrix jacchus (White-tufted-ear marmoset)).